The primary structure comprises 560 residues: Zinc finger protein 250 (560 aa).

The 72-residue stretch at leucine 22 to glycine 93 folds into the KRAB domain. Residues lysine 125, lysine 136, lysine 148, and lysine 162 each participate in a glycyl lysine isopeptide (Lys-Gly) (interchain with G-Cter in SUMO2) cross-link. A C2H2-type 1 zinc finger spans residues tyrosine 199–histidine 221. Lysine 225 is covalently cross-linked (Glycyl lysine isopeptide (Lys-Gly) (interchain with G-Cter in SUMO2)). 7 consecutive C2H2-type zinc fingers follow at residues tyrosine 227–histidine 249, tyrosine 255–histidine 277, histidine 283–histidine 305, tyrosine 311–histidine 333, histidine 339–histidine 361, tyrosine 367–histidine 389, and tyrosine 395–histidine 417. Residue lysine 421 forms a Glycyl lysine isopeptide (Lys-Gly) (interchain with G-Cter in SUMO2) linkage. 5 consecutive C2H2-type zinc fingers follow at residues tyrosine 423–histidine 445, tyrosine 451–histidine 473, phenylalanine 479–histidine 501, tyrosine 507–histidine 529, and tyrosine 535–histidine 557.

This sequence belongs to the krueppel C2H2-type zinc-finger protein family.

It localises to the nucleus. Functionally, may be involved in transcriptional regulation. The polypeptide is Zinc finger protein 250 (ZNF250) (Homo sapiens (Human)).